A 637-amino-acid chain; its full sequence is Biosynthetic arginine decarboxylase (637 aa).

Lysine 101 carries the N6-(pyridoxal phosphate)lysine modification. 286–296 (VDIGGGLGVDY) is a binding site for substrate.

It belongs to the Orn/Lys/Arg decarboxylase class-II family. SpeA subfamily. Requires Mg(2+) as cofactor. The cofactor is pyridoxal 5'-phosphate.

The enzyme catalyses L-arginine + H(+) = agmatine + CO2. It functions in the pathway amine and polyamine biosynthesis; agmatine biosynthesis; agmatine from L-arginine: step 1/1. In terms of biological role, catalyzes the biosynthesis of agmatine from arginine. The protein is Biosynthetic arginine decarboxylase of Marinobacter nauticus (strain ATCC 700491 / DSM 11845 / VT8) (Marinobacter aquaeolei).